The primary structure comprises 311 residues: 4-diphosphocytidyl-2-C-methyl-D-erythritol kinase (311 aa).

Residue Lys16 is part of the active site. 101–111 (PVAGGMAGGSA) lines the ATP pocket. Residue Asp143 is part of the active site.

It belongs to the GHMP kinase family. IspE subfamily.

The catalysed reaction is 4-CDP-2-C-methyl-D-erythritol + ATP = 4-CDP-2-C-methyl-D-erythritol 2-phosphate + ADP + H(+). It participates in isoprenoid biosynthesis; isopentenyl diphosphate biosynthesis via DXP pathway; isopentenyl diphosphate from 1-deoxy-D-xylulose 5-phosphate: step 3/6. Functionally, catalyzes the phosphorylation of the position 2 hydroxy group of 4-diphosphocytidyl-2C-methyl-D-erythritol. In Rhodococcus jostii (strain RHA1), this protein is 4-diphosphocytidyl-2-C-methyl-D-erythritol kinase.